Consider the following 82-residue polypeptide: RNA-binding protein KhpA (82 aa).

A KH domain is found at 35–82 (STILELRVSQSDVGKIIGRRGRIARAIRTLLGACAAKTNRRVQLEILD).

Belongs to the KhpA RNA-binding protein family. As to quaternary structure, forms a complex with KhpB.

It localises to the cytoplasm. Its function is as follows. A probable RNA chaperone. Forms a complex with KhpB which binds to cellular RNA and controls its expression. Plays a role in peptidoglycan (PG) homeostasis and cell length regulation. The sequence is that of RNA-binding protein KhpA from Borreliella burgdorferi (strain ATCC 35210 / DSM 4680 / CIP 102532 / B31) (Borrelia burgdorferi).